A 32-amino-acid chain; its full sequence is ATP synthase 28 kDa subunit, mitochondrial (32 aa).

The protein localises to the mitochondrion. Its subcellular location is the mitochondrion inner membrane. In terms of biological role, mitochondrial membrane ATP synthase (F(1)F(0) ATP synthase or Complex V) produces ATP from ADP in the presence of a proton gradient across the membrane which is generated by electron transport complexes of the respiratory chain. F-type ATPases consist of two structural domains, F(1) - containing the extramembraneous catalytic core and F(0) - containing the membrane proton channel, linked together by a central stalk and a peripheral stalk. During catalysis, ATP synthesis in the catalytic domain of F(1) is coupled via a rotary mechanism of the central stalk subunits to proton translocation. Part of the complex F(0) domain. This chain is ATP synthase 28 kDa subunit, mitochondrial, found in Spinacia oleracea (Spinach).